The sequence spans 264 residues: Thymidylate synthase (264 aa).

Arg21 provides a ligand contact to dUMP. (6R)-5,10-methylene-5,6,7,8-tetrahydrofolate is bound at residue His51. 126-127 is a dUMP binding site; sequence RR. The active-site Nucleophile is the Cys146. DUMP contacts are provided by residues 166-169, Asn177, and 207-209; these read RSAD and HLY. Asp169 is a (6R)-5,10-methylene-5,6,7,8-tetrahydrofolate binding site. Ala263 lines the (6R)-5,10-methylene-5,6,7,8-tetrahydrofolate pocket.

It belongs to the thymidylate synthase family. Bacterial-type ThyA subfamily. As to quaternary structure, homodimer.

Its subcellular location is the cytoplasm. The enzyme catalyses dUMP + (6R)-5,10-methylene-5,6,7,8-tetrahydrofolate = 7,8-dihydrofolate + dTMP. It participates in pyrimidine metabolism; dTTP biosynthesis. Its function is as follows. Catalyzes the reductive methylation of 2'-deoxyuridine-5'-monophosphate (dUMP) to 2'-deoxythymidine-5'-monophosphate (dTMP) while utilizing 5,10-methylenetetrahydrofolate (mTHF) as the methyl donor and reductant in the reaction, yielding dihydrofolate (DHF) as a by-product. This enzymatic reaction provides an intracellular de novo source of dTMP, an essential precursor for DNA biosynthesis. The chain is Thymidylate synthase from Hahella chejuensis (strain KCTC 2396).